A 238-amino-acid chain; its full sequence is Ditrans,polycis-undecaprenyl-diphosphate synthase ((2E,6E)-farnesyl-diphosphate specific) (238 aa).

Residue Asp14 is part of the active site. Residue Asp14 coordinates Mg(2+). Residues 15–18 (GNGR), Trp19, Arg27, His31, and 59–61 (SSE) each bind substrate. The active-site Proton acceptor is Asn62. Residues Trp63, Arg65, Arg182, and 188-190 (RIS) contribute to the substrate site. Glu201 contacts Mg(2+).

The protein belongs to the UPP synthase family. In terms of assembly, homodimer. Requires Mg(2+) as cofactor.

It carries out the reaction 8 isopentenyl diphosphate + (2E,6E)-farnesyl diphosphate = di-trans,octa-cis-undecaprenyl diphosphate + 8 diphosphate. Its function is as follows. Catalyzes the sequential condensation of isopentenyl diphosphate (IPP) with (2E,6E)-farnesyl diphosphate (E,E-FPP) to yield (2Z,6Z,10Z,14Z,18Z,22Z,26Z,30Z,34E,38E)-undecaprenyl diphosphate (di-trans,octa-cis-UPP). UPP is the precursor of glycosyl carrier lipid in the biosynthesis of bacterial cell wall polysaccharide components such as peptidoglycan and lipopolysaccharide. This is Ditrans,polycis-undecaprenyl-diphosphate synthase ((2E,6E)-farnesyl-diphosphate specific) from Legionella pneumophila subsp. pneumophila (strain Philadelphia 1 / ATCC 33152 / DSM 7513).